Here is a 481-residue protein sequence, read N- to C-terminus: Chromosomal replication initiator protein DnaA (481 aa).

The domain I, interacts with DnaA modulators stretch occupies residues 1–74; the sequence is MSQDLWSFCL…ELGAEFHGAP (74 aa). The interval 74-144 is domain II; sequence PIEIELVLPA…TASDLAYEKT (71 aa). A disordered region spans residues 101–123; sequence AGPAPAPTPSQAPAATAAAPAVV. Positions 111–123 are enriched in low complexity; that stretch reads QAPAATAAAPAVV. The segment at 145-361 is domain III, AAA+ region; it reads RLNADFTFDT…GALNKVVAFA (217 aa). ATP contacts are provided by G189, G191, K192, and T193. The segment at 362–481 is domain IV, binds dsDNA; it reads RFHGRGITLE…VHVLTQVLRG (120 aa).

The protein belongs to the DnaA family. In terms of assembly, oligomerizes as a right-handed, spiral filament on DNA at oriC.

The protein localises to the cytoplasm. In terms of biological role, plays an essential role in the initiation and regulation of chromosomal replication. ATP-DnaA binds to the origin of replication (oriC) to initiate formation of the DNA replication initiation complex once per cell cycle. Binds the DnaA box (a 9 base pair repeat at the origin) and separates the double-stranded (ds)DNA. Forms a right-handed helical filament on oriC DNA; dsDNA binds to the exterior of the filament while single-stranded (ss)DNA is stabiized in the filament's interior. The ATP-DnaA-oriC complex binds and stabilizes one strand of the AT-rich DNA unwinding element (DUE), permitting loading of DNA polymerase. After initiation quickly degrades to an ADP-DnaA complex that is not apt for DNA replication. Binds acidic phospholipids. The polypeptide is Chromosomal replication initiator protein DnaA (Aromatoleum aromaticum (strain DSM 19018 / LMG 30748 / EbN1) (Azoarcus sp. (strain EbN1))).